The sequence spans 254 residues: Adenosylcobinamide-GDP ribazoletransferase (254 aa).

7 helical membrane-spanning segments follow: residues 27–47 (SSLY…VLLA), 50–70 (GMGV…GLIL), 104–124 (VGSF…ICLL), 131–151 (AYGM…LLAA), 170–190 (AGWP…FVLL), 194–214 (LAPS…VGWL), and 233–253 (LVEA…FWAI).

The protein belongs to the CobS family. Mg(2+) serves as cofactor.

The protein resides in the cell inner membrane. It catalyses the reaction alpha-ribazole + adenosylcob(III)inamide-GDP = adenosylcob(III)alamin + GMP + H(+). The catalysed reaction is alpha-ribazole 5'-phosphate + adenosylcob(III)inamide-GDP = adenosylcob(III)alamin 5'-phosphate + GMP + H(+). The protein operates within cofactor biosynthesis; adenosylcobalamin biosynthesis; adenosylcobalamin from cob(II)yrinate a,c-diamide: step 7/7. In terms of biological role, joins adenosylcobinamide-GDP and alpha-ribazole to generate adenosylcobalamin (Ado-cobalamin). Also synthesizes adenosylcobalamin 5'-phosphate from adenosylcobinamide-GDP and alpha-ribazole 5'-phosphate. The chain is Adenosylcobinamide-GDP ribazoletransferase from Chlorobaculum tepidum (strain ATCC 49652 / DSM 12025 / NBRC 103806 / TLS) (Chlorobium tepidum).